Here is a 298-residue protein sequence, read N- to C-terminus: Mitochondrial basic amino acids transporter (298 aa).

Helical transmembrane passes span 2–22 (ALDFLAGCAGGVAGVLVGHPF), 61–81 (GLGSPLLGLTFINALVFGVQG), 96–116 (FLAGAAAGAIQCVICCPMELA), 153–172 (GMVSTLLRETPSFGVYFLTY), 187–207 (LLVPKLLLAGGTSGIASWLST), and 255–275 (LLRAFPVNAATFATVTVVLSY). Solcar repeat units follow at residues 2-86 (ALDF…TLRA), 90-178 (DSPL…LTRA), and 185-275 (DRLL…VLSY).

The protein belongs to the mitochondrial carrier (TC 2.A.29) family.

It localises to the mitochondrion inner membrane. The enzyme catalyses L-lysine(out) + L-arginine(in) = L-lysine(in) + L-arginine(out). It catalyses the reaction L-histidine(out) + L-arginine(in) = L-histidine(in) + L-arginine(out). The catalysed reaction is L-ornithine(in) + L-arginine(out) = L-ornithine(out) + L-arginine(in). It carries out the reaction L-homoarginine(in) + L-arginine(out) = L-homoarginine(out) + L-arginine(in). The enzyme catalyses N(omega)-methyl-L-arginine(in) + L-arginine(out) = N(omega)-methyl-L-arginine(out) + L-arginine(in). It catalyses the reaction L-arginine(in) = L-arginine(out). The catalysed reaction is L-lysine(in) = L-lysine(out). It carries out the reaction L-ornithine(in) = L-ornithine(out). The enzyme catalyses L-histidine(out) = L-histidine(in). In terms of biological role, mitochondrial transporter of arginine, lysine, homoarginine, methylarginine and, to a much lesser extent, ornithine and histidine. Does not transport carnitine nor acylcarnitines. Functions by both counter-exchange and uniport mechanisms. Plays a physiological role in the import of basic amino acids into mitochondria for mitochondrial protein synthesis and amino acid degradation. In Bos taurus (Bovine), this protein is Mitochondrial basic amino acids transporter (SLC25A29).